The chain runs to 106 residues: Iron-sulfur cluster assembly protein CyaY (106 aa).

Belongs to the frataxin family.

In terms of biological role, involved in iron-sulfur (Fe-S) cluster assembly. May act as a regulator of Fe-S biogenesis. The polypeptide is Iron-sulfur cluster assembly protein CyaY (Salmonella arizonae (strain ATCC BAA-731 / CDC346-86 / RSK2980)).